The following is a 463-amino-acid chain: L-seryl-tRNA(Sec) selenium transferase (463 aa).

N6-(pyridoxal phosphate)lysine is present on K295.

The protein belongs to the SelA family. As to quaternary structure, homodecamer; pentamer of dimers. Binds only one seryl-tRNA(Sec) per dimer. It depends on pyridoxal 5'-phosphate as a cofactor.

The protein resides in the cytoplasm. It catalyses the reaction L-seryl-tRNA(Sec) + selenophosphate + H(+) = L-selenocysteinyl-tRNA(Sec) + phosphate. It functions in the pathway aminoacyl-tRNA biosynthesis; selenocysteinyl-tRNA(Sec) biosynthesis; selenocysteinyl-tRNA(Sec) from L-seryl-tRNA(Sec) (bacterial route): step 1/1. Its function is as follows. Converts seryl-tRNA(Sec) to selenocysteinyl-tRNA(Sec) required for selenoprotein biosynthesis. This is L-seryl-tRNA(Sec) selenium transferase from Escherichia coli O17:K52:H18 (strain UMN026 / ExPEC).